A 336-amino-acid chain; its full sequence is MDLDVVNMFVIAGGTLAIPILAFVASFLLWPSALIRIYYWYWRRTLGMQVRYAHHEDYQFCYSFRGRPGHKPSILMLHGFSAHKDMWLSVVKFLPKNLHLVCVDMPGHEGTTRSSLDDLSIVGQVKRIHQFVECLKLNKKPFHLIGTSMGGHVAGVYAAYYPSDVCSLSLVCPAGLQYSTDNPFVQRLKELEESAAIQKIPLIPSTPEEMSEMLQLCSYVRFKVPQQILQGLVDVRIPHNSFYRKLFLEIVNEKSRYSLHENMDKIKVPTQIIWGKQDQVLDVSGADILAKSISNSQVEVLENCGHSVVMERPRKTAKLIVDFLASVHNTDNKKLN.

Residues 1-8 (MDLDVVNM) are Extracellular-facing. The helical; Signal-anchor for type II membrane protein transmembrane segment at 9–29 (FVIAGGTLAIPILAFVASFLL) threads the bilayer. At 30 to 336 (WPSALIRIYY…VHNTDNKKLN (307 aa)) the chain is on the cytoplasmic side. Residue Ser-148 is the Nucleophile of the active site. Residues Asp-278 and His-306 each act as charge relay system in the active site.

The protein belongs to the AB hydrolase superfamily. In terms of tissue distribution, widely expressed with higher expression in small intestine, liver and brown adipose tissue. In brain, expressed postsynaptically in cortical neurons but not detected in microglia (at protein level).

It is found in the late endosome membrane. The protein resides in the lysosome membrane. Its subcellular location is the mitochondrion membrane. It catalyses the reaction Hydrolyzes glycerol monoesters of long-chain fatty acids.. It carries out the reaction 2-(5Z,8Z,11Z,14Z-eicosatetraenoyl)-glycerol + H2O = glycerol + (5Z,8Z,11Z,14Z)-eicosatetraenoate + H(+). The catalysed reaction is 1-octanoylglycerol + H2O = octanoate + glycerol + H(+). The enzyme catalyses 1-decanoylglycerol + H2O = decanoate + glycerol + H(+). It catalyses the reaction 1-dodecanoylglycerol + H2O = dodecanoate + glycerol + H(+). It carries out the reaction 1-tetradecanoylglycerol + H2O = tetradecanoate + glycerol + H(+). The catalysed reaction is 2-hexadecanoylglycerol + H2O = glycerol + hexadecanoate + H(+). The enzyme catalyses 2-(9Z-octadecenoyl)-glycerol + H2O = glycerol + (9Z)-octadecenoate + H(+). It catalyses the reaction 1-(9Z-octadecenoyl)-glycerol + H2O = glycerol + (9Z)-octadecenoate + H(+). It carries out the reaction 2-(9Z,12Z-octadecadienoyl)-glycerol + H2O = (9Z,12Z)-octadecadienoate + glycerol + H(+). The catalysed reaction is 1-(5Z,8Z,11Z,14Z-eicosatetraenoyl)-glycerol + H2O = glycerol + (5Z,8Z,11Z,14Z)-eicosatetraenoate + H(+). The enzyme catalyses 1-(9Z,12Z-octadecadienoyl)-glycerol + H2O = (9Z,12Z)-octadecadienoate + glycerol + H(+). It catalyses the reaction 3-(9Z-octadecenoyl)-sn-glycero-1-phospho-(3'-(9Z-octadecenoyl)-1'-sn-glycerol) + H2O = 3-(9Z-octadecenoyl)-sn-glycero-1-phospho-(1'-sn-glycerol) + (9Z)-octadecenoate + H(+). It carries out the reaction (S,S)-2-(9Z-octadecenoyl)-sn-glycero-1-phospho-(2'-(9Z-octadecenoyl)-1'-sn-glycerol) + H2O = (S,S)-2-(9Z-octadecenoyl)-sn-glycero-1-phospho-(1'-sn-glycerol) + (9Z)-octadecenoate + H(+). The catalysed reaction is (R,R)-2-(9Z-octadecenoyl)-sn-glycero-3-phospho-(2'-(9Z-octadecenoyl)-3'-sn-glycerol) + H2O = (R,R)-2-(9Z-octadecenoyl)-sn-glycero-3-phospho-(3'-sn-glycerol) + (9Z)-octadecenoate + H(+). In terms of biological role, lipase that preferentially hydrolysis medium-chain saturated monoacylglycerols including 2-arachidonoylglycerol. Through 2-arachidonoylglycerol degradation may regulate endocannabinoid signaling pathways. Also has a lysophosphatidyl lipase activity with a preference for lysophosphatidylglycerol among other lysophospholipids. Also able to degrade bis(monoacylglycero)phosphate (BMP) and constitutes the major enzyme for BMP catabolism. BMP, also known as lysobisphosphatidic acid, is enriched in late endosomes and lysosomes and plays a key role in the formation of intraluminal vesicles and in lipid sorting. The chain is Monoacylglycerol lipase ABHD6 from Mus musculus (Mouse).